Reading from the N-terminus, the 610-residue chain is MSDELRKRGTTPIANIRNFSIVAHIDHGKSTLADRLIQMTGGLSDREMAGKEQVLDSMDIERERGITIKAQTVRLNYHAKDGKDYIFNLMDTPGHVDFAYEVSRSLAACEGSLLVVDASQGVEAQTLANVYQALDNNHEIVPVLNKVDLPAAEPDKVKQQIEDVIGIDASDAVMISAKTGLGVPDVLEAIVTRLPPPQGDRDATLKALLVDSWYDVYLGVVVLVRIVDGVMKKNSRIRMMGTNAAYDVERVGFFTPKMQQVDELGPGEIGFITAAIKEVADTRVGDTITDDRKPITEMLPGFKPAIPVVFCGLFPVDADDFETLRTAMGKLRLNDASFSFEMETSAALGFGFRCGFLGLLHLEIIQERLSREFDLNLIATAPSVIYKMKLTDGGEIEIHNPIDMPDVVKIAEIAEPWIEATILTPDDYLGSVLKLCQERRGSQKELTYVGSRAMVRYDLPLNEVVFDFYDRLKSVSKGYASFDYHLTDYKVADLVKMQILVNGEPVDALSMLVHRTRAEGRGRAMVEKMKELIPPHMFQIPIQAAIGGKVIARETVRALRKDVTAKCYGGDITRKRKLLEKQKEGKKKMRQFGKVDIPQEAFIAALKVDG.

The region spanning 14 to 198 (ANIRNFSIVA…AIVTRLPPPQ (185 aa)) is the tr-type G domain. GTP-binding positions include 26-31 (DHGKST) and 145-148 (NKVD).

This sequence belongs to the TRAFAC class translation factor GTPase superfamily. Classic translation factor GTPase family. LepA subfamily.

Its subcellular location is the cell inner membrane. The catalysed reaction is GTP + H2O = GDP + phosphate + H(+). Its function is as follows. Required for accurate and efficient protein synthesis under certain stress conditions. May act as a fidelity factor of the translation reaction, by catalyzing a one-codon backward translocation of tRNAs on improperly translocated ribosomes. Back-translocation proceeds from a post-translocation (POST) complex to a pre-translocation (PRE) complex, thus giving elongation factor G a second chance to translocate the tRNAs correctly. Binds to ribosomes in a GTP-dependent manner. In Nitrobacter hamburgensis (strain DSM 10229 / NCIMB 13809 / X14), this protein is Elongation factor 4.